A 128-amino-acid polypeptide reads, in one-letter code: Small ribosomal subunit protein uS12 (128 aa).

Positions 1–24 are disordered; that stretch reads MPTFNQLVKYGREKRKKKSKAPAL. The residue at position 89 (aspartate 89) is a 3-methylthioaspartic acid. The tract at residues 105 to 128 is disordered; the sequence is AGVEGRRQSRSKYGTKRPKEEKGG.

Belongs to the universal ribosomal protein uS12 family. As to quaternary structure, part of the 30S ribosomal subunit. Contacts proteins S8 and S17. May interact with IF1 in the 30S initiation complex.

In terms of biological role, with S4 and S5 plays an important role in translational accuracy. Interacts with and stabilizes bases of the 16S rRNA that are involved in tRNA selection in the A site and with the mRNA backbone. Located at the interface of the 30S and 50S subunits, it traverses the body of the 30S subunit contacting proteins on the other side and probably holding the rRNA structure together. The combined cluster of proteins S8, S12 and S17 appears to hold together the shoulder and platform of the 30S subunit. The sequence is that of Small ribosomal subunit protein uS12 from Aquifex aeolicus (strain VF5).